The primary structure comprises 704 residues: MIQNEVSATHGSTKKGITYNTILEAAQRPTPLVPLKKLKVEHQLQSDIYVKLEYLNIAGSLEDRTADKAFQFAEEIGVVRGDEVFVTAGGSAAISYATVAAVKGIKLTIYAPKGEFDLVDTVLHTLGVKTVELPFGTFAEARVQTDEAAQQKGVFSLNKFTTNAAFVANLQKTALEIEKAVNNKSIGKVGAVVIPLNTGAAAAGIAAYYKGIGEHGVRVVGVTCKKDTIPEMGLDLKNDLLQEYNVEKREVEEDEAYSFTRHLIGTEGIMAGPSSGAAVLEAIKLAKELPAGSTIVVVLMDGIRNYLRHFLDDDWITANKKDVVTRKDGPQPNSIYDPKVLVYDPTKLAGEWTQDPETKSWSHSEVEFNKFNPERPLVLDTVLDAIGKTPLVKLQHIPKAHGVKCNVYVKCEYMNAGGSTKDRIAKRMVEIAEKTGKPGKLVPGVTLIEPTSGNTGIGLSLASAVRGYKCIITMPKKMSKEKSIAMASLGSTIIRTPNEAGFDSPHSHIGVALRLKSEIQDAVVLDQYCNPGNPLAHYEETAEEIIYDMGDKHIDLVVLTAGTGGTVTGISRKIHERIPTAKVVGVDPHGSILAGPAETDIDFYEVEGIGYDFLPGTLDTSAIDYWAKSHDKESFLMARELIRSEGILCGGSSGCAVHYALEECKSLNLPAEANVVVLLPDGIRNYITKFLDDDWMNERHFLDA.

Residues Asn454, 562–566, and Ser652 each bind pyridoxal 5'-phosphate; that span reads GTGGT.

It belongs to the cysteine synthase/cystathionine beta-synthase family. In terms of assembly, monomer. As to quaternary structure, does not bind pyridoxal 5'-phosphate, PLP; which may explain why this isoform has virtually undetectable catalytic activity. Pyridoxal 5'-phosphate serves as cofactor.

It localises to the cytoplasm. It catalyses the reaction L-homocysteine + L-serine = L,L-cystathionine + H2O. It functions in the pathway amino-acid biosynthesis; L-cysteine biosynthesis; L-cysteine from L-homocysteine and L-serine: step 1/2. Its function is as follows. Hydro-lyase catalyzing the first step of the transsulfuration pathway, where the hydroxyl group of L-serine is displaced by L-homocysteine in a beta-replacement reaction to form L-cystathionine, the precursor of L-cysteine. Plays a role in maintaining homocysteine homeostasis. Involved in cold-induced somatic longevity mediated by prostaglandin E2 (PGE2) signals from adult germ cells, perhaps acting via a role in the production of hydrogen sulfide (H2S). Required for normal development. The chain is Cystathionine beta-synthase cbs-1 from Caenorhabditis elegans.